A 544-amino-acid polypeptide reads, in one-letter code: Chaperonin GroEL 1 (544 aa).

ATP contacts are provided by residues 30–33 (TLGP), K51, 87–91 (DGTTT), G415, 481–483 (DAL), and D497.

This sequence belongs to the chaperonin (HSP60) family. In terms of assembly, forms a cylinder of 14 subunits composed of two heptameric rings stacked back-to-back. Interacts with the co-chaperonin GroES.

It localises to the cytoplasm. The catalysed reaction is ATP + H2O + a folded polypeptide = ADP + phosphate + an unfolded polypeptide.. Together with its co-chaperonin GroES, plays an essential role in assisting protein folding. The GroEL-GroES system forms a nano-cage that allows encapsulation of the non-native substrate proteins and provides a physical environment optimized to promote and accelerate protein folding. This Chlamydia caviae (strain ATCC VR-813 / DSM 19441 / 03DC25 / GPIC) (Chlamydophila caviae) protein is Chaperonin GroEL 1.